The sequence spans 341 residues: Phosphate acyltransferase (341 aa).

It belongs to the PlsX family. In terms of assembly, homodimer. Probably interacts with PlsY.

The protein resides in the cytoplasm. It catalyses the reaction a fatty acyl-[ACP] + phosphate = an acyl phosphate + holo-[ACP]. It functions in the pathway lipid metabolism; phospholipid metabolism. Catalyzes the reversible formation of acyl-phosphate (acyl-PO(4)) from acyl-[acyl-carrier-protein] (acyl-ACP). This enzyme utilizes acyl-ACP as fatty acyl donor, but not acyl-CoA. The polypeptide is Phosphate acyltransferase (Idiomarina loihiensis (strain ATCC BAA-735 / DSM 15497 / L2-TR)).